Consider the following 150-residue polypeptide: Dual specificity protein phosphatase 23 (150 aa).

In terms of domain architecture, Tyrosine-protein phosphatase spans asparagine 7–lysine 150. Cysteine 95 acts as the Phosphocysteine intermediate in catalysis.

It belongs to the protein-tyrosine phosphatase family. Non-receptor class dual specificity subfamily. As to expression, widely expressed. Highly expressed in spleen, prostate, colon, adrenal gland, mammary gland, thyroid and trachea. Expressed at lower level in uterus, small intestine, bladder, bone marrow, brain, spinal cord and stomach.

It is found in the cytoplasm. It localises to the cytosol. The protein localises to the nucleus. It catalyses the reaction O-phospho-L-tyrosyl-[protein] + H2O = L-tyrosyl-[protein] + phosphate. The enzyme catalyses O-phospho-L-seryl-[protein] + H2O = L-seryl-[protein] + phosphate. The catalysed reaction is O-phospho-L-threonyl-[protein] + H2O = L-threonyl-[protein] + phosphate. Its function is as follows. Protein phosphatase that mediates dephosphorylation of proteins phosphorylated on Tyr and Ser/Thr residues. In vitro, it can dephosphorylate p44-ERK1 (MAPK3) but not p54 SAPK-beta (MAPK10) in vitro. Able to enhance activation of JNK and p38 (MAPK14). The protein is Dual specificity protein phosphatase 23 (DUSP23) of Homo sapiens (Human).